Here is a 151-residue protein sequence, read N- to C-terminus: 3-dehydroquinate dehydratase (151 aa).

Y24 acts as the Proton acceptor in catalysis. Substrate contacts are provided by N76, H82, and D89. The active-site Proton donor is H102. Residues 103 to 104 (VS) and R113 each bind substrate.

The protein belongs to the type-II 3-dehydroquinase family. As to quaternary structure, homododecamer.

The enzyme catalyses 3-dehydroquinate = 3-dehydroshikimate + H2O. Its pathway is metabolic intermediate biosynthesis; chorismate biosynthesis; chorismate from D-erythrose 4-phosphate and phosphoenolpyruvate: step 3/7. In terms of biological role, catalyzes a trans-dehydration via an enolate intermediate. The polypeptide is 3-dehydroquinate dehydratase (Afipia carboxidovorans (strain ATCC 49405 / DSM 1227 / KCTC 32145 / OM5) (Oligotropha carboxidovorans)).